We begin with the raw amino-acid sequence, 240 residues long: Probable transcriptional activator (240 aa).

Residues 17–28 are essential for the oxygen-regulated activity; the sequence is CTSCQARHGVVC. One can recognise an HTH crp-type domain in the interval 158–232; that stretch reads RTAEEKVASL…FRHIIVPDMD (75 aa). The H-T-H motif DNA-binding region spans 191–210; it reads RAEIADFLGLTIETVSRQMT.

Functionally, promotes the microaerobic and symbiotic induction of fixN, possibly by binding to the FNR consensus binding site upstream of fixN. This is Probable transcriptional activator (fnrN) from Rhizobium leguminosarum bv. viciae.